A 433-amino-acid chain; its full sequence is tRNA modification GTPase MnmE (433 aa).

Residues arginine 24, glutamate 86, and lysine 125 each coordinate (6S)-5-formyl-5,6,7,8-tetrahydrofolate. Positions 218 to 363 constitute a TrmE-type G domain; that stretch reads GARLALIGAP…LKEALREALL (146 aa). Asparagine 228 lines the K(+) pocket. GTP is bound by residues 228-233, 247-253, and 272-275; these read NAGKSS, SPIPGTT, and DTAG. Serine 232 serves as a coordination point for Mg(2+). K(+) contacts are provided by serine 247, isoleucine 249, and threonine 252. Threonine 253 is a binding site for Mg(2+). Position 433 (lysine 433) interacts with (6S)-5-formyl-5,6,7,8-tetrahydrofolate.

The protein belongs to the TRAFAC class TrmE-Era-EngA-EngB-Septin-like GTPase superfamily. TrmE GTPase family. As to quaternary structure, homodimer. Heterotetramer of two MnmE and two MnmG subunits. The cofactor is K(+).

The protein localises to the cytoplasm. Functionally, exhibits a very high intrinsic GTPase hydrolysis rate. Involved in the addition of a carboxymethylaminomethyl (cmnm) group at the wobble position (U34) of certain tRNAs, forming tRNA-cmnm(5)s(2)U34. The chain is tRNA modification GTPase MnmE from Thermus thermophilus (strain ATCC BAA-163 / DSM 7039 / HB27).